The primary structure comprises 250 residues: 5'-nucleotidase SurE (250 aa).

Asp-8, Asp-9, Ser-40, and Asn-95 together coordinate a divalent metal cation.

The protein belongs to the SurE nucleotidase family. A divalent metal cation is required as a cofactor.

It localises to the cytoplasm. It catalyses the reaction a ribonucleoside 5'-phosphate + H2O = a ribonucleoside + phosphate. Functionally, nucleotidase that shows phosphatase activity on nucleoside 5'-monophosphates. This is 5'-nucleotidase SurE from Nitratidesulfovibrio vulgaris (strain ATCC 29579 / DSM 644 / CCUG 34227 / NCIMB 8303 / VKM B-1760 / Hildenborough) (Desulfovibrio vulgaris).